The primary structure comprises 68 residues: Large ribosomal subunit protein bL31 (68 aa).

Zn(2+) is bound by residues Cys17, Cys19, Cys37, and Cys40.

The protein belongs to the bacterial ribosomal protein bL31 family. Type A subfamily. Part of the 50S ribosomal subunit. Requires Zn(2+) as cofactor.

Binds the 23S rRNA. This chain is Large ribosomal subunit protein bL31, found in Dehalococcoides mccartyi (strain ATCC BAA-2266 / KCTC 15142 / 195) (Dehalococcoides ethenogenes (strain 195)).